A 170-amino-acid chain; its full sequence is Small ribosomal subunit protein uS5 (170 aa).

In terms of domain architecture, S5 DRBM spans 16–79 (IEDQLVAINR…EAGKKNMISV (64 aa)).

It belongs to the universal ribosomal protein uS5 family. In terms of assembly, part of the 30S ribosomal subunit. Contacts proteins S4 and S8.

With S4 and S12 plays an important role in translational accuracy. In terms of biological role, located at the back of the 30S subunit body where it stabilizes the conformation of the head with respect to the body. The sequence is that of Small ribosomal subunit protein uS5 from Lactobacillus delbrueckii subsp. bulgaricus (strain ATCC 11842 / DSM 20081 / BCRC 10696 / JCM 1002 / NBRC 13953 / NCIMB 11778 / NCTC 12712 / WDCM 00102 / Lb 14).